Here is a 495-residue protein sequence, read N- to C-terminus: Cardiolipin synthase A (495 aa).

A run of 2 helical transmembrane segments spans residues 9 to 29 (IEVLFVIIKWILLLGYWWLIT) and 46 to 66 (MAWLLIIYVVPFIGAIIYLLL). PLD phosphodiesterase domains lie at 227–254 (MDLRQHRKMILIDNYIGYTGSMNMIDPK) and 408–435 (EGGLLHTKSILVDDQLSLVGTVNLDMRS). Catalysis depends on residues H232, K234, D239, H413, K415, and D420.

This sequence belongs to the phospholipase D family. Cardiolipin synthase subfamily. ClsA sub-subfamily.

The protein resides in the cell membrane. It carries out the reaction 2 a 1,2-diacyl-sn-glycero-3-phospho-(1'-sn-glycerol) = a cardiolipin + glycerol. Its function is as follows. Catalyzes the reversible phosphatidyl group transfer from one phosphatidylglycerol molecule to another to form cardiolipin (CL) (diphosphatidylglycerol) and glycerol. This chain is Cardiolipin synthase A, found in Wigglesworthia glossinidia brevipalpis.